The chain runs to 279 residues: Dehydrogenase/reductase SDR family member 4 (279 aa).

Leu-37 to Val-61 serves as a coordination point for NADP(+). An N6-acetyllysine; alternate modification is found at Lys-93. Residue Lys-93 is modified to N6-succinyllysine; alternate. The residue at position 106 (Lys-106) is an N6-acetyllysine. Substrate is bound at residue Ser-170. Residue Tyr-183 is the Proton acceptor of the active site. Lys-187 lines the NADP(+) pocket. The residue at position 217 (Lys-217) is an N6-acetyllysine; alternate. Lys-217 carries the N6-succinyllysine; alternate modification. At Ser-221 the chain carries Phosphoserine. N6-succinyllysine is present on residues Lys-228 and Lys-235. A Peroxisomal targeting signal motif is present at residues Ser-277–Leu-279.

This sequence belongs to the short-chain dehydrogenases/reductases (SDR) family. Homotetramer.

It is found in the peroxisome. The enzyme catalyses a secondary alcohol + NADP(+) = a ketone + NADPH + H(+). It carries out the reaction 3alpha-hydroxy-5beta-pregnan-20-one + NADP(+) = 5beta-pregnan-3,20-dione + NADPH + H(+). It catalyses the reaction 5beta-dihydrotestosterone + NADPH + H(+) = 5beta-androstane-3alpha,17beta-diol + NADP(+). The catalysed reaction is all-trans-retinol + NADP(+) = all-trans-retinal + NADPH + H(+). The enzyme catalyses isatin + NADPH + H(+) = 3-hydroxyindolin-2-one + NADP(+). Functionally, NADPH-dependent oxidoreductase which catalyzes the reduction of a variety of compounds bearing carbonyl groups including ketosteroids, alpha-dicarbonyl compounds, aldehydes, aromatic ketones and quinones. Reduces all-trans-retinal and 9-cis retinal. Reduces 3-ketosteroids and benzil into 3alpha-hydroxysteroids and S-benzoin, respectively, in contrast to the stereoselectivity of primates DHRS4s which produce 3beta-hydroxysteroids and R-benzoin. In the reverse reaction, catalyzes the NADP-dependent oxidation of 3alpha-hydroxysteroids and alcohol, but with much lower efficiency. Involved in the metabolism of 3alpha-hydroxysteroids, retinoid, isatin and xenobiotic carbonyl compounds. The protein is Dehydrogenase/reductase SDR family member 4 of Mus musculus (Mouse).